The following is a 757-amino-acid chain: RNA-directed RNA polymerase catalytic subunit (757 aa).

A disordered region spans residues 50 to 81; the sequence is SEKGKWTTNTETGAPQLNPIDGPLPENHEPSG. Residues 55 to 64 are compositionally biased toward polar residues; sequence WTTNTETGAP. 2 short sequence motifs (nuclear localization signal) span residues 187–195 and 203–216; these read RKRRIRDNM and RTIG…NKKS. The promoter-binding site stretch occupies residues 249–256; sequence RGFVYFVE. Residues 286–483 form the RdRp catalytic domain; sequence VRKMMTNSQD…GINMSKKKSY (198 aa).

It belongs to the influenza viruses polymerase PB1 family. In terms of assembly, influenza RNA polymerase is composed of three subunits: PB1, PB2 and PA. Interacts (via N-terminus) with PA (via C-terminus). Interacts (via C-terminus) with PB2 (via N-terminus); this interaction is essential for transcription initiation. Post-translationally, phosphorylated by host PRKCA.

Its subcellular location is the host nucleus. The protein resides in the host cytoplasm. The enzyme catalyses RNA(n) + a ribonucleoside 5'-triphosphate = RNA(n+1) + diphosphate. In terms of biological role, RNA-dependent RNA polymerase which is responsible for replication and transcription of virus RNA segments. The transcription of viral mRNAs occurs by a unique mechanism called cap-snatching. 5' methylated caps of cellular mRNAs are cleaved after 10-13 nucleotides by PA. In turn, these short capped RNAs are used as primers by PB1 for transcription of viral mRNAs. During virus replication, PB1 initiates RNA synthesis and copy vRNA into complementary RNA (cRNA) which in turn serves as a template for the production of more vRNAs. This is RNA-directed RNA polymerase catalytic subunit from Aves (Cat).